Reading from the N-terminus, the 296-residue chain is Dof zinc finger protein DOF3.7 (296 aa).

Residues 41 to 69 (NTRPNATASNGGSGGNTNNTATMETRKAR) form a disordered region. A compositionally biased stretch (low complexity) spans 45–62 (NATASNGGSGGNTNNTAT). The Dof-type zinc-finger motif lies at 74–128 (VNCPRCNSTNTKFCYYNNYSLTQPRYFCKGCRRYWTEGGSLRNVPVGGSSRKNKR). Residues cysteine 76, cysteine 79, cysteine 101, and cysteine 104 each contribute to the Zn(2+) site. The interval 115-146 (RNVPVGGSSRKNKRSSTPLASPSNPKLPDLNP) is disordered. Positions 129-138 (SSTPLASPSN) are enriched in polar residues.

In terms of tissue distribution, expressed in the phloem of the mother plant, including in roots, stem, leaves and flowers, but not present in the seed and embryo. In maturing siliques, found all through the funiculus connecting the placenta to the ovule, but not in the ovule.

Its subcellular location is the nucleus. In terms of biological role, transcription factor specifically involved in the maternal control of seed germination. Regulates transcription by binding to a 5'-AA[AG]G-3' consensus core sequence. May ensure the inactivity of a component that would be activated to trigger germination as a consequence of red light perception. The polypeptide is Dof zinc finger protein DOF3.7 (DOF3.7) (Arabidopsis thaliana (Mouse-ear cress)).